Reading from the N-terminus, the 89-residue chain is Small ribosomal subunit protein uS15 (89 aa).

It belongs to the universal ribosomal protein uS15 family. As to quaternary structure, part of the 30S ribosomal subunit. Forms a bridge to the 50S subunit in the 70S ribosome, contacting the 23S rRNA.

One of the primary rRNA binding proteins, it binds directly to 16S rRNA where it helps nucleate assembly of the platform of the 30S subunit by binding and bridging several RNA helices of the 16S rRNA. Its function is as follows. Forms an intersubunit bridge (bridge B4) with the 23S rRNA of the 50S subunit in the ribosome. The protein is Small ribosomal subunit protein uS15 of Chlorobaculum tepidum (strain ATCC 49652 / DSM 12025 / NBRC 103806 / TLS) (Chlorobium tepidum).